The sequence spans 175 residues: Large ribosomal subunit protein uL16 (175 aa).

Belongs to the universal ribosomal protein uL16 family.

This Metallosphaera sedula (strain ATCC 51363 / DSM 5348 / JCM 9185 / NBRC 15509 / TH2) protein is Large ribosomal subunit protein uL16.